Reading from the N-terminus, the 282-residue chain is MIDLLVILVSLLFGVVWYEKQLQTRIKIKEHFTILQPPPVIAAECPGSTTPWCVSNLDLANTSCQWFKKETTIKNLLGPANPKTLIPPVMVPRITDQSEWATDNYKLHSAINQTHSRALDYLADGQTTASCSSSPPLVYSSFNSNCCDGVKQGETHPLTVYDPRSVGGCTNPSRCFIDPVVGQPRYYYDDVNVTRAPNYITRNKLDTFSFGQTTGRLSNPNCLSDRPSINQLAVDHFHDNILQYRSSLMDSFRCKTQARSDQLRQFPISTNGQLAASGGSKV.

The signal sequence occupies residues 1-18 (MIDLLVILVSLLFGVVWY).

It belongs to the IIV-6 213R family.

This is an uncharacterized protein from Aedes vexans (Inland floodwater mosquito).